We begin with the raw amino-acid sequence, 60 residues long: MTQVVIGQNEAIESALRRFKRQVAKAGIYADIKKNQFFETPEEKRKRKAIARRRQRSRRR.

The segment at 41 to 60 (PEEKRKRKAIARRRQRSRRR) is disordered. Residues 45–60 (RKRKAIARRRQRSRRR) show a composition bias toward basic residues.

The protein belongs to the bacterial ribosomal protein bS21 family.

The protein is Small ribosomal subunit protein bS21 of Gloeothece citriformis (strain PCC 7424) (Cyanothece sp. (strain PCC 7424)).